The primary structure comprises 127 residues: Small ribosomal subunit protein bS6 (127 aa).

The protein belongs to the bacterial ribosomal protein bS6 family.

Binds together with bS18 to 16S ribosomal RNA. The chain is Small ribosomal subunit protein bS6 from Sulfurovum sp. (strain NBC37-1).